We begin with the raw amino-acid sequence, 75 residues long: DNA-directed RNA polymerase subunit Rpo5 (75 aa).

The protein belongs to the archaeal Rpo5/eukaryotic RPB5 RNA polymerase subunit family. Part of the RNA polymerase complex.

It localises to the cytoplasm. It carries out the reaction RNA(n) + a ribonucleoside 5'-triphosphate = RNA(n+1) + diphosphate. In terms of biological role, DNA-dependent RNA polymerase (RNAP) catalyzes the transcription of DNA into RNA using the four ribonucleoside triphosphates as substrates. This is DNA-directed RNA polymerase subunit Rpo5 from Pyrobaculum aerophilum (strain ATCC 51768 / DSM 7523 / JCM 9630 / CIP 104966 / NBRC 100827 / IM2).